Consider the following 460-residue polypeptide: ATP synthase subunit beta (460 aa).

Residue 150 to 157 (GGAGVGKT) coordinates ATP.

It belongs to the ATPase alpha/beta chains family. F-type ATPases have 2 components, CF(1) - the catalytic core - and CF(0) - the membrane proton channel. CF(1) has five subunits: alpha(3), beta(3), gamma(1), delta(1), epsilon(1). CF(0) has three main subunits: a(1), b(2) and c(9-12). The alpha and beta chains form an alternating ring which encloses part of the gamma chain. CF(1) is attached to CF(0) by a central stalk formed by the gamma and epsilon chains, while a peripheral stalk is formed by the delta and b chains.

The protein resides in the cell inner membrane. The enzyme catalyses ATP + H2O + 4 H(+)(in) = ADP + phosphate + 5 H(+)(out). Its function is as follows. Produces ATP from ADP in the presence of a proton gradient across the membrane. The catalytic sites are hosted primarily by the beta subunits. The chain is ATP synthase subunit beta from Pectobacterium carotovorum subsp. carotovorum (strain PC1).